The primary structure comprises 132 residues: Small ribosomal subunit protein uS8 (132 aa).

It belongs to the universal ribosomal protein uS8 family. In terms of assembly, part of the 30S ribosomal subunit. Contacts proteins S5 and S12.

Its function is as follows. One of the primary rRNA binding proteins, it binds directly to 16S rRNA central domain where it helps coordinate assembly of the platform of the 30S subunit. This Borrelia garinii subsp. bavariensis (strain ATCC BAA-2496 / DSM 23469 / PBi) (Borreliella bavariensis) protein is Small ribosomal subunit protein uS8.